The primary structure comprises 304 residues: Acetylglutamate kinase (304 aa).

Residues 77–78 (GG), arginine 99, and asparagine 201 each bind substrate.

It belongs to the acetylglutamate kinase family. ArgB subfamily.

It localises to the cytoplasm. The enzyme catalyses N-acetyl-L-glutamate + ATP = N-acetyl-L-glutamyl 5-phosphate + ADP. Its pathway is amino-acid biosynthesis; L-arginine biosynthesis; N(2)-acetyl-L-ornithine from L-glutamate: step 2/4. Functionally, catalyzes the ATP-dependent phosphorylation of N-acetyl-L-glutamate. The sequence is that of Acetylglutamate kinase from Methylibium petroleiphilum (strain ATCC BAA-1232 / LMG 22953 / PM1).